Here is a 499-residue protein sequence, read N- to C-terminus: Probable lipid II flippase MurJ (499 aa).

Transmembrane regions (helical) follow at residues 4–24, 26–46, 88–108, 130–150, 154–174, 184–204, 227–247, 265–285, 297–317, 335–355, 375–395, 396–416, 425–445, and 455–475; these read LFRA…FGYV, DATV…FIAF, LLIT…EEII, FTIL…ILLV, FFVP…SLVI, LALA…FLLF, FLFT…DTFL, IYLL…LALV, TALK…FFLS, LFYT…YSLQ, AFLS…LLNF, GVYS…VYLY, IPFG…GLVY, and FILV…LIIL.

It belongs to the MurJ/MviN family.

The protein resides in the cell inner membrane. The protein operates within cell wall biogenesis; peptidoglycan biosynthesis. In terms of biological role, involved in peptidoglycan biosynthesis. Transports lipid-linked peptidoglycan precursors from the inner to the outer leaflet of the cytoplasmic membrane. The polypeptide is Probable lipid II flippase MurJ (Aquifex aeolicus (strain VF5)).